Consider the following 111-residue polypeptide: Cytochrome c (111 aa).

A1 carries the N-acetylalanine modification. Heme c-binding residues include C22, C25, and H26. K80 is subject to N6,N6,N6-trimethyllysine. Residue M88 participates in heme c binding. An N6,N6,N6-trimethyllysine modification is found at K94.

The protein belongs to the cytochrome c family. In terms of processing, binds 1 heme c group covalently per subunit.

Its subcellular location is the mitochondrion intermembrane space. Its function is as follows. Electron carrier protein. The oxidized form of the cytochrome c heme group can accept an electron from the heme group of the cytochrome c1 subunit of cytochrome reductase. Cytochrome c then transfers this electron to the cytochrome oxidase complex, the final protein carrier in the mitochondrial electron-transport chain. In Sesamum indicum (Oriental sesame), this protein is Cytochrome c.